The following is a 101-amino-acid chain: Small ribosomal subunit protein uS14A (101 aa).

2 stretches are compositionally biased toward basic and acidic residues: residues K28–A44 and R61–P70. Residues K28–L74 form a disordered region.

The protein belongs to the universal ribosomal protein uS14 family. In terms of assembly, part of the 30S ribosomal subunit. Contacts proteins S3 and S10.

In terms of biological role, binds 16S rRNA, required for the assembly of 30S particles and may also be responsible for determining the conformation of the 16S rRNA at the A site. This is Small ribosomal subunit protein uS14A from Rhodococcus jostii (strain RHA1).